Here is a 662-residue protein sequence, read N- to C-terminus: Polyunsaturated fatty acid (12S)/(13S)-lipoxygenase, epidermal-type (662 aa).

One can recognise a PLAT domain in the interval 2-114 (VKYKILVATG…TICLTEGTAL (113 aa)). In terms of domain architecture, Lipoxygenase spans 115-662 (KVTDDTQNLF…PSLVENSVTI (548 aa)). Fe cation-binding residues include H360, H365, H540, and I662.

Belongs to the lipoxygenase family. It depends on Fe cation as a cofactor. In terms of tissue distribution, expressed in epidermis.

It is found in the cytoplasm. It carries out the reaction (5Z,8Z,11Z,14Z)-eicosatetraenoate + O2 = (12S)-hydroperoxy-(5Z,8Z,10E,14Z)-eicosatetraenoate. It catalyses the reaction 1-O-methyl-(9Z,12Z)-octadecadienoate + O2 = 1-O-methyl-(13S)-hydroperoxy-(9Z,11E)-octadecadienoate. The enzyme catalyses (8Z,11Z,14Z)-eicosatrienoate + O2 = (12S)-hydroperoxy-(8Z,10E,14Z)-eicosatrienoate. The catalysed reaction is (5Z,8Z,11Z)-eicosatrienoate + O2 = (12S)-hydroperoxy-(5Z,8Z,10E)-eicosatrienoate. It carries out the reaction 1-O-methyl-(5Z,8Z,11Z,14Z)-eicosatetraenoate + O2 = 1-O-methyl-(12S)-hydroperoxy-(5Z,8Z,10E,14Z)-eicosatetraenoate. It catalyses the reaction (9Z,12Z)-octadecadienoate + O2 = (13S)-hydroperoxy-(9Z,11E)-octadecadienoate. The enzyme catalyses (4Z,7Z,10Z,13Z,16Z,19Z)-docosahexaenoate + O2 = (14S)-hydroperoxy-(4Z,7Z,10Z,12E,16Z,19Z)-docosahexaenoate. The protein operates within lipid metabolism; hydroperoxy eicosatetraenoic acid biosynthesis. Arachidonate 12-lipoxygenase activity is decreased when the pH decreases from 7.4 to 6.0. In terms of biological role, catalyzes the regio and stereo-specific incorporation of a single molecule of dioxygen into free and esterified polyunsaturated fatty acids generating lipid hydroperoxides that can be further reduced to the corresponding hydroxy species. Shows increasing catalytic activity within the series arachidonic acid &lt; 5,8,11-eicosatrienoic acid &lt; linoleic acid &lt; 8,11,14-eicosatrienoic acid. The polypeptide is Polyunsaturated fatty acid (12S)/(13S)-lipoxygenase, epidermal-type (Mus musculus (Mouse)).